The following is an 83-amino-acid chain: Polcalcin Bra r 2 (83 aa).

2 consecutive EF-hand domains span residues 5–40 and 43–75; these read TEKAEHDRIFKKFDANGDGKISASELGDALKNLGSV and DDIKRMMAEIDTDGDGYISYQEFSDFASANRGL. Positions 18, 20, 22, 24, 29, 53, 55, 57, 59, and 64 each coordinate Ca(2+).

The chain is Polcalcin Bra r 2 from Brassica campestris (Field mustard).